We begin with the raw amino-acid sequence, 74 residues long: Fulgimotoxin (74 aa).

Gln-1 is subject to Pyrrolidone carboxylic acid. 5 cysteine pairs are disulfide-bonded: Cys-10/Cys-34, Cys-13/Cys-21, Cys-27/Cys-51, Cys-55/Cys-66, and Cys-67/Cys-72.

Belongs to the three-finger toxin family. Ancestral subfamily. Boigatoxin sub-subfamily. As to quaternary structure, monomer. The N-terminus is blocked. In terms of processing, contains 5 disulfide bonds. Expressed by the venom gland.

It localises to the secreted. Its function is as follows. Reptile-specific three-finger toxin that is lethal at low doses for lizards, but not for mice. Probably acts as a neurotoxin. The polypeptide is Fulgimotoxin (Oxybelis fulgidus (Green vine snake)).